A 601-amino-acid chain; its full sequence is Jacalin-related lectin 3 (601 aa).

Jacalin-type lectin domains lie at 13 to 155 (PASL…HTQP), 240 to 382 (AKTY…HVME), and 438 to 583 (PSGP…HMQH).

The protein belongs to the jacalin lectin family.

In Arabidopsis thaliana (Mouse-ear cress), this protein is Jacalin-related lectin 3 (JAL3).